Consider the following 344-residue polypeptide: Methionine import ATP-binding protein MetN (344 aa).

An ABC transporter domain is found at 2–241; sequence IELQGLSQRF…PQHEVTRAMI (240 aa). 38-45 is a binding site for ATP; that stretch reads GRSGAGKS.

This sequence belongs to the ABC transporter superfamily. Methionine importer (TC 3.A.1.24) family. The complex is composed of two ATP-binding proteins (MetN), two transmembrane proteins (MetI) and a solute-binding protein (MetQ).

It is found in the cell inner membrane. It carries out the reaction L-methionine(out) + ATP + H2O = L-methionine(in) + ADP + phosphate + H(+). It catalyses the reaction D-methionine(out) + ATP + H2O = D-methionine(in) + ADP + phosphate + H(+). Its function is as follows. Part of the ABC transporter complex MetNIQ involved in methionine import. Responsible for energy coupling to the transport system. The protein is Methionine import ATP-binding protein MetN of Cupriavidus metallidurans (strain ATCC 43123 / DSM 2839 / NBRC 102507 / CH34) (Ralstonia metallidurans).